Here is a 781-residue protein sequence, read N- to C-terminus: Mitogen-activated protein kinase 7 (781 aa).

A disordered region spans residues 1-27; it reads MAEPLKEDDGEDGSGEPPGPVKAEPAG. Ala-2 is modified (N-acetylalanine). The interval 2 to 77 is required for cytoplasmic targeting; the sequence is AEPLKEDDGE…VVSSARRRLT (76 aa). Residues 55–347 form the Protein kinase domain; it reads YEIIETIGNG…AAAALRHPFL (293 aa). ATP contacts are provided by residues 61 to 69 and Lys-84; that span reads IGNGAYGVV. Residues 78–139 are required for binding to MAP2K5; that stretch reads GQQVAIKKIP…FKSVYVVLDL (62 aa). Positions 140–406 are necessary for oligomerization; sequence MESDLHQIIH…QQIRFQPSLQ (267 aa). The active-site Proton acceptor is Asp-182. The TXY motif lies at 219-221; that stretch reads TEY. A disordered region spans residues 402–708; the sequence is QPSLQPVASE…PKGSGAGYGV (307 aa). A may not be required for kinase activity; required to stimulate MEF2C activity region spans residues 407-781; sequence PVASEPGCPD…LADLPDLQEP (375 aa). Composition is skewed to pro residues over residues 433-445 and 454-463; these read SPPP…PGPA and QPPPPASEPA. Positions 476 to 486 are enriched in low complexity; it reads KAALKAALLKS. Basic and acidic residues-rich tracts occupy residues 502–519, 527–544, and 563–573; these read PEPR…EREE, RAKE…KERG, and DNDRSLLERWT. Residues 505 to 539 carry the Nuclear localization signal motif; it reads RKPVTAQERQREREEKRRRRQERAKEREKRRQERE. Pro residues-rich tracts occupy residues 578-594 and 601-614; these read PPAP…PPAG and GPLP…PAPA. Low complexity-rich tracts occupy residues 615 to 632 and 642 to 652; these read AGPA…LAPQ and GPSALSVLPYF. A compositionally biased stretch (pro residues) spans 653–664; it reads PSGPPPPDPGGA. Over residues 668–685 the composition is skewed to polar residues; that stretch reads STSESPDVTLVTQQLSKS. Ser-685 bears the Phosphoserine mark. Thr-698 carries the post-translational modification Phosphothreonine.

This sequence belongs to the protein kinase superfamily. CMGC Ser/Thr protein kinase family. MAP kinase subfamily. In terms of assembly, interacts with MAP2K5. Forms oligomers. Interacts with MEF2A, MEF2C and MEF2D; the interaction phosphorylates the MEF2s and enhances transcriptional activity of MEF2A, MEF2C but not MEF2D. Interacts with SGK1. Interacts with PML. Interacts (via N-terminal half) with HSP90AB1-CDC37 chaperone complex in resting cells; the interaction is MAP2K5-independent and prevents MAPK7 from ubiquitination and proteasomal degradation. Interacts with STUB1/CHIP; the interaction is enhanced in the presence of IGF1 or MAP2K5 and promotes STUB1/CHIP E3 ligase activity. It depends on Mg(2+) as a cofactor. Post-translationally, dually phosphorylated on Thr-219 and Tyr-221, which activates the enzyme.

It is found in the cytoplasm. The protein resides in the nucleus. It localises to the PML body. The catalysed reaction is L-seryl-[protein] + ATP = O-phospho-L-seryl-[protein] + ADP + H(+). The enzyme catalyses L-threonyl-[protein] + ATP = O-phospho-L-threonyl-[protein] + ADP + H(+). With respect to regulation, activated by tyrosine and threonine phosphorylation. Activated in response to hyperosmolarity, hydrogen peroxide, and epidermal growth factor (EGF). Plays a role in various cellular processes such as proliferation, differentiation and cell survival. The upstream activator of MAPK7 is the MAPK kinase MAP2K5. Upon activation, it translocates to the nucleus and phosphorylates various downstream targets including MEF2C. EGF activates MAPK7 through a Ras-independent and MAP2K5-dependent pathway. As part of the MAPK/ERK signaling pathway, acts as a negative regulator of apoptosis in cardiomyocytes via interaction with STUB1/CHIP and promotion of STUB1-mediated ubiquitination and degradation of ICER-type isoforms of CREM. May have a role in muscle cell differentiation. May be important for endothelial function and maintenance of blood vessel integrity. MAP2K5 and MAPK7 interact specifically with one another and not with MEK1/ERK1 or MEK2/ERK2 pathways. Phosphorylates SGK1 at Ser-78 and this is required for growth factor-induced cell cycle progression. Involved in the regulation of p53/TP53 by disrupting the PML-MDM2 interaction. This Bos taurus (Bovine) protein is Mitogen-activated protein kinase 7 (MAPK7).